A 361-amino-acid chain; its full sequence is Chorismate synthase (361 aa).

A compositionally biased stretch (basic and acidic residues) spans 38–49 (EKDMQHDLDRRR). Residues 38–58 (EKDMQHDLDRRRPGTSKYTTQ) are disordered. R48 is a binding site for NADP(+). FMN is bound by residues 125–127 (RSS), 238–239 (NA), G278, 293–297 (KPTSS), and R319.

This sequence belongs to the chorismate synthase family. In terms of assembly, homotetramer. It depends on FMNH2 as a cofactor.

The enzyme catalyses 5-O-(1-carboxyvinyl)-3-phosphoshikimate = chorismate + phosphate. It participates in metabolic intermediate biosynthesis; chorismate biosynthesis; chorismate from D-erythrose 4-phosphate and phosphoenolpyruvate: step 7/7. Functionally, catalyzes the anti-1,4-elimination of the C-3 phosphate and the C-6 proR hydrogen from 5-enolpyruvylshikimate-3-phosphate (EPSP) to yield chorismate, which is the branch point compound that serves as the starting substrate for the three terminal pathways of aromatic amino acid biosynthesis. This reaction introduces a second double bond into the aromatic ring system. This chain is Chorismate synthase, found in Photobacterium profundum (strain SS9).